Reading from the N-terminus, the 123-residue chain is ATP synthase epsilon chain (123 aa).

It belongs to the ATPase epsilon chain family. As to quaternary structure, F-type ATPases have 2 components, CF(1) - the catalytic core - and CF(0) - the membrane proton channel. CF(1) has five subunits: alpha(3), beta(3), gamma(1), delta(1), epsilon(1). CF(0) has three main subunits: a, b and c.

The protein localises to the cell inner membrane. Functionally, produces ATP from ADP in the presence of a proton gradient across the membrane. The sequence is that of ATP synthase epsilon chain (atpC) from Helicobacter pylori (strain ATCC 700392 / 26695) (Campylobacter pylori).